Consider the following 411-residue polypeptide: Cladofulvin cluster transcriptional coactivator claA (411 aa).

The segment covering 1-27 (MSDSLAGNGMRQNLNRSSTSSNHTGHA) has biased composition (polar residues). Positions 1-32 (MSDSLAGNGMRQNLNRSSTSSNHTGHAQNGRA) are disordered. In terms of domain architecture, HTH iclR-type spans 47–117 (LACQVQSLAC…DPGHIAHTAL (71 aa)). A DNA-binding region (H-T-H motif) is located at residues 77–96 (LHDVAELANVPASQLSRVVR).

The protein resides in the nucleus. In terms of biological role, transcriptional coactivator; part of the gene cluster that mediates the biosynthesis of cladofulvin, a conidial pigment not required for virulence but that plays a role in fitness and resistance to environmental stresses including UV light and low-temperature stress. With claE, coregulates the production of cladofulvin. In Passalora fulva (Tomato leaf mold), this protein is Cladofulvin cluster transcriptional coactivator claA.